An 834-amino-acid chain; its full sequence is Probable phosphoenolpyruvate synthase (834 aa).

Residue histidine 447 is the Tele-phosphohistidine intermediate of the active site. Substrate-binding residues include arginine 550, arginine 598, glutamate 699, glycine 720, serine 721, asparagine 722, and aspartate 723. Glutamate 699 lines the Mg(2+) pocket. Mg(2+) is bound at residue aspartate 723. Cysteine 772 functions as the Proton donor in the catalytic mechanism.

It belongs to the PEP-utilizing enzyme family. In terms of assembly, homooligomer. Forms a large complex of about 2000 kDa. Mg(2+) is required as a cofactor. Post-translationally, the N-terminus is blocked.

The enzyme catalyses pyruvate + ATP + H2O = phosphoenolpyruvate + AMP + phosphate + 2 H(+). It functions in the pathway carbohydrate biosynthesis; gluconeogenesis. Its function is as follows. Catalyzes the phosphorylation of pyruvate to phosphoenolpyruvate. The chain is Probable phosphoenolpyruvate synthase (ppsA) from Staphylothermus marinus (strain ATCC 43588 / DSM 3639 / JCM 9404 / F1).